We begin with the raw amino-acid sequence, 365 residues long: tRNA/tmRNA (uracil-C(5))-methyltransferase (365 aa).

Gln-196, Tyr-224, Asn-229, Glu-245, and Asp-298 together coordinate S-adenosyl-L-methionine. Cys-323 acts as the Nucleophile in catalysis. The active-site Proton acceptor is Glu-357.

Belongs to the class I-like SAM-binding methyltransferase superfamily. RNA M5U methyltransferase family. TrmA subfamily.

The enzyme catalyses uridine(54) in tRNA + S-adenosyl-L-methionine = 5-methyluridine(54) in tRNA + S-adenosyl-L-homocysteine + H(+). It carries out the reaction uridine(341) in tmRNA + S-adenosyl-L-methionine = 5-methyluridine(341) in tmRNA + S-adenosyl-L-homocysteine + H(+). Its function is as follows. Dual-specificity methyltransferase that catalyzes the formation of 5-methyluridine at position 54 (m5U54) in all tRNAs, and that of position 341 (m5U341) in tmRNA (transfer-mRNA). In Nautilia profundicola (strain ATCC BAA-1463 / DSM 18972 / AmH), this protein is tRNA/tmRNA (uracil-C(5))-methyltransferase.